Consider the following 338-residue polypeptide: 1-aminocyclopropane-1-carboxylate deaminase (338 aa).

An N6-(pyridoxal phosphate)lysine modification is found at Lys-51. Ser-78 acts as the Nucleophile in catalysis.

This sequence belongs to the ACC deaminase/D-cysteine desulfhydrase family. In terms of assembly, homotrimer. Pyridoxal 5'-phosphate is required as a cofactor.

It catalyses the reaction 1-aminocyclopropane-1-carboxylate + H2O = 2-oxobutanoate + NH4(+). Its function is as follows. Catalyzes a cyclopropane ring-opening reaction, the irreversible conversion of 1-aminocyclopropane-1-carboxylate (ACC) to ammonia and alpha-ketobutyrate. Allows growth on ACC as a nitrogen source. The sequence is that of 1-aminocyclopropane-1-carboxylate deaminase from Burkholderia thailandensis (strain ATCC 700388 / DSM 13276 / CCUG 48851 / CIP 106301 / E264).